We begin with the raw amino-acid sequence, 225 residues long: Small ribosomal subunit protein uS5 (225 aa).

Residues 57–120 (LEEQVLDVKL…AHAKLSLIKV (64 aa)) enclose the S5 DRBM domain.

The protein belongs to the universal ribosomal protein uS5 family. In terms of assembly, part of the 30S ribosomal subunit. Contacts protein S4.

With S4 and S12 plays an important role in translational accuracy. The chain is Small ribosomal subunit protein uS5 from Methanococcus maripaludis (strain DSM 14266 / JCM 13030 / NBRC 101832 / S2 / LL).